Reading from the N-terminus, the 621-residue chain is Chaperone protein HscA homolog (621 aa).

Belongs to the heat shock protein 70 family.

In terms of biological role, chaperone involved in the maturation of iron-sulfur cluster-containing proteins. Has a low intrinsic ATPase activity which is markedly stimulated by HscB. This Cupriavidus metallidurans (strain ATCC 43123 / DSM 2839 / NBRC 102507 / CH34) (Ralstonia metallidurans) protein is Chaperone protein HscA homolog.